The primary structure comprises 465 residues: CUGBP Elav-like family member 3 (465 aa).

2 consecutive RRM domains span residues 7–88 (IKLF…PADS) and 95–175 (RKLF…FADT). A compositionally biased stretch (pro residues) spans 346–359 (PPALVAQQPPPPPQ). The interval 346–379 (PPALVAQQPPPPPQQQQQQQQQQQQQQQREGPDG) is disordered. The segment covering 360–373 (QQQQQQQQQQQQQQ) has biased composition (low complexity). Positions 380–458 (CNIFIYHLPQ…KRLKVQLKRP (79 aa)) constitute an RRM 3 domain.

This sequence belongs to the CELF/BRUNOL family. In terms of tissue distribution, expressed in brain.

It is found in the nucleus. The protein resides in the cytoplasm. In terms of biological role, RNA-binding protein involved in the regulation of pre-mRNA alternative splicing. Mediates exon inclusion and/or exclusion in pre-mRNA that are subject to tissue-specific and developmentally regulated alternative splicing. Specifically activates exon 5 inclusion of cardiac isoforms of TNNT2 during heart remodeling at the juvenile to adult transition. Activates the splicing of MAPT/Tau exon 10. Binds to muscle-specific splicing enhancer (MSE) intronic sites flanking the alternative exon 5 of TNNT2 pre-mRNA. This chain is CUGBP Elav-like family member 3 (CELF3), found in Homo sapiens (Human).